A 72-amino-acid polypeptide reads, in one-letter code: Large ribosomal subunit protein bL28 (72 aa).

Belongs to the bacterial ribosomal protein bL28 family.

The polypeptide is Large ribosomal subunit protein bL28 (Pelodictyon phaeoclathratiforme (strain DSM 5477 / BU-1)).